Consider the following 296-residue polypeptide: Ribosomal protein L11 methyltransferase (296 aa).

The S-adenosyl-L-methionine site is built by Thr147, Gly168, Asp190, and Asn232.

This sequence belongs to the methyltransferase superfamily. PrmA family.

Its subcellular location is the cytoplasm. It carries out the reaction L-lysyl-[protein] + 3 S-adenosyl-L-methionine = N(6),N(6),N(6)-trimethyl-L-lysyl-[protein] + 3 S-adenosyl-L-homocysteine + 3 H(+). Methylates ribosomal protein L11. In Marinomonas sp. (strain MWYL1), this protein is Ribosomal protein L11 methyltransferase.